The sequence spans 288 residues: Small ribosomal subunit protein uS3 (288 aa).

The region spanning 39-107 is the KH type-2 domain; sequence VREYLKAKLK…PVAVNIEEVR (69 aa). Residues 209–288 are disordered; sequence GRNDLPAAET…AAAAADGKGE (80 aa). Residues 219–238 are compositionally biased toward basic and acidic residues; sequence PRPEEERRPRGPRRDGRPGD. Low complexity predominate over residues 277–288; the sequence is APAAAAADGKGE.

It belongs to the universal ribosomal protein uS3 family. Part of the 30S ribosomal subunit. Forms a tight complex with proteins S10 and S14.

Binds the lower part of the 30S subunit head. Binds mRNA in the 70S ribosome, positioning it for translation. In Acidovorax sp. (strain JS42), this protein is Small ribosomal subunit protein uS3.